Here is a 39-residue protein sequence, read N- to C-terminus: Phosphate starvation-inducible protein 1 (39 aa).

It localises to the cell outer membrane. The protein is Phosphate starvation-inducible protein 1 of Pseudomonas fluorescens.